Reading from the N-terminus, the 359-residue chain is 4-galactosyl-N-acetylglucosaminide 3-alpha-L-fucosyltransferase FUT6 (359 aa).

Over 1–14 (MDPLGPAKPQWSCR) the chain is Cytoplasmic. A helical; Signal-anchor for type II membrane protein transmembrane segment spans residues 15–34 (CCLTTLLFQLLVAVCFFSYL). Topologically, residues 35 to 359 (RVSRDDPTVY…QTRSITAWFT (325 aa)) are lumenal. N-linked (GlcNAc...) asparagine glycosylation is found at asparagine 46, asparagine 91, asparagine 153, and asparagine 184. The segment at 73–112 (KPTALPRCSEMLPGTADCNITADRKVYPQADAVIVHHREV) is determines site-specific fucosylation.

Belongs to the glycosyltransferase 10 family. In terms of assembly, homodimer and monomer. Monomer (secreted form). Post-translationally, N-glycosylated. Proteolytic cleavage releases a secreted glycoform of 43 kDa.

The protein localises to the golgi apparatus. The protein resides in the golgi stack membrane. It is found in the secreted. It carries out the reaction a beta-D-galactosyl-(1-&gt;4)-N-acetyl-beta-D-glucosaminyl derivative + GDP-beta-L-fucose = a beta-D-galactosyl-(1-&gt;4)-[alpha-L-fucosyl-(1-&gt;3)]-N-acetyl-beta-D-glucosaminyl derivative + GDP + H(+). It catalyses the reaction an N-acetyl-alpha-neuraminyl-(2-&gt;3)-beta-D-galactosyl-(1-&gt;4)-N-acetyl-beta-D-glucosaminyl derivative + GDP-beta-L-fucose = an alpha-Neu5Ac-(2-&gt;3)-beta-D-Gal-(1-&gt;4)-[alpha-L-Fuc-(1-&gt;3)]-beta-D-GlcNAc derivative + GDP + H(+). The catalysed reaction is an alpha-Neu5Ac-(2-&gt;3)-beta-D-Gal-(1-&gt;4)-beta-D-GlcNAc-(1-&gt;3)-beta-D-Gal-(1-&gt;4)-[alpha-L-Fuc-(1-&gt;3)]-beta-D-GlcNAc derivative + GDP-beta-L-fucose = an alpha-Neu5Ac-(2-&gt;3)-beta-D-Gal-(1-&gt;4)-[alpha-L-Fuc-(1-&gt;3)]-beta-D-GlcNAc-(1-&gt;3)-beta-D-Gal-(1-&gt;4)-[alpha-L-Fuc-(1-&gt;3)]-beta-D-GlcNAc derivative + GDP + H(+). The enzyme catalyses a neolactoside nLc6Cer + GDP-beta-L-fucose = beta-D-Gal-(1-&gt;4)-[alpha-L-Fuc-(1-&gt;3)]-beta-D-GlcNAc-(1-&gt;3)-beta-D-Gal-(1-&gt;4)-beta-D-GlcNAc-(1-&gt;3)-beta-D-Gal-(1-&gt;4)-beta-D-Glc-(1&lt;-&gt;1')-Cer + GDP + H(+). It carries out the reaction a neolactoside nLc6Cer + GDP-beta-L-fucose = beta-D-galactosyl-(1-&gt;4)-N-acetyl-beta-D-glucosaminyl-(1-&gt;3)-beta-D-galactosyl-(1-&gt;4)-[alpha-L-fucosyl-(1-&gt;3)]-N-acetyl-beta-D-glucosaminyl-(1-&gt;3)-beta-D-galactosyl-(1-&gt;4)-beta-D-glucosyl-(1&lt;-&gt;1')-ceramide + GDP + H(+). It catalyses the reaction a neolactoside VI(3)-alpha-NeuNAc-nLc6Cer + GDP-beta-L-fucose = a neolactoside VI(3)-alpha-NeuAc,V(3)-alphaFuc-nLc6Cer + GDP + H(+). The catalysed reaction is beta-D-galactosyl-(1-&gt;4)-N-acetyl-D-glucosamine + GDP-beta-L-fucose = beta-D-galactosyl-(1-&gt;4)-[alpha-L-fucosyl-(1-&gt;3)]-N-acetyl-D-glucosamine + GDP + H(+). The enzyme catalyses N-acetyl-alpha-neuraminosyl-(2-&gt;3)-beta-D-galactosyl-(1-&gt;4)-N-acetyl-beta-D-glucosamine + GDP-beta-L-fucose = N-acetyl-alpha-neuraminosyl-(2-&gt;3)-beta-D-galactosyl-(1-&gt;4)-[alpha-L-fucosyl-(1-&gt;3)]-N-acetyl-beta-D-glucosamine + GDP + H(+). It carries out the reaction lactose + GDP-beta-L-fucose = beta-D-galactosyl-(1-&gt;4)-[alpha-L-fucosyl-(1-&gt;3)]-D-glucose + GDP + H(+). It catalyses the reaction alpha-L-Fuc-(1-&gt;2)-beta-D-Gal-(1-&gt;4)-D-Glc + GDP-beta-L-fucose = alpha-L-Fuc-(1-&gt;2)-beta-D-Gal-(1-&gt;4)-[alpha-L-Fuc-(1-&gt;3)]-D-Glc + GDP + H(+). The catalysed reaction is a beta-D-galactosyl-(1-&gt;4)-N-acetyl-beta-D-6-sulfooxy-glucosaminyl derivative + GDP-beta-L-fucose = a beta-D-galactosyl-(1-&gt;4)-[alpha-L-fucosyl-(1-&gt;3)]-N-acetyl-beta-D-6-sulfooxy-glucosaminyl derivative + GDP + H(+). The protein operates within protein modification; protein glycosylation. Functionally, catalyzes the transfer of L-fucose, from a guanosine diphosphate-beta-L-fucose, to the N-acetyl glucosamine (GlcNAc) of a distal alpha2,3 sialylated lactosamine unit of a glycoprotein- or glycolipid-linked sialopolylactosamines chain or of a distal or internal lactosamine unit of a neutral glycoprotein- or glycolipid-linked polylactosamines chain through an alpha-1,3 glycosidic linkage and participates in surface expression of the sialyl Lewis X (sLe(x)), Lewis X (Le(x)) and non sialylated VIM2 determinants. Moreover transfers fucose to H-type 2 (Fucalpha1-2Galbeta1-4GlcNAc) chain acceptor substrates and participates in difucosylated sialyl Lewis x determinants. Also fucosylates a polylactosamine substrate having a 6 sulfate modification at the GlcNAc moiety and gives rise to sialyl and non-sialyl 6-sulfo lewis X. Does not have activity towards type 1 ((Galbeta1-3GlcNAc)) and H-type 1 chain (Fucalpha1-2Galbeta1-3GlcNAc) acceptors substrates. The sequence is that of 4-galactosyl-N-acetylglucosaminide 3-alpha-L-fucosyltransferase FUT6 from Gorilla gorilla gorilla (Western lowland gorilla).